A 443-amino-acid polypeptide reads, in one-letter code: uncharacterized protein (443 aa).

The next 10 membrane-spanning stretches (helical) occupy residues 7 to 29, 68 to 87, 94 to 111, 121 to 143, 150 to 164, 179 to 201, 206 to 225, 358 to 375, 382 to 399, and 409 to 431; these read VSLY…MLNT, YISS…SIFT, VLSL…YAIF, VTLF…SMFA, IVII…SLTC, IIST…YIFF, LIIK…FAIS, IRFI…FIRN, LFVV…SFFG, and LFGM…IYKI.

It is found in the cell membrane. This is an uncharacterized protein from Escherichia coli (strain K12).